The chain runs to 210 residues: Flagellar transcriptional regulator FlhC (210 aa).

Zn(2+) contacts are provided by Cys-144, Cys-147, Cys-164, and Cys-167.

This sequence belongs to the FlhC family. In terms of assembly, heterohexamer composed of two FlhC and four FlhD subunits. Each FlhC binds a FlhD dimer, forming a heterotrimer, and a hexamer assembles by dimerization of two heterotrimers. Zn(2+) serves as cofactor.

It is found in the cytoplasm. Its function is as follows. Functions in complex with FlhD as a master transcriptional regulator that regulates transcription of several flagellar and non-flagellar operons by binding to their promoter region. Activates expression of class 2 flagellar genes, including fliA, which is a flagellum-specific sigma factor that turns on the class 3 genes. Also regulates genes whose products function in a variety of physiological pathways. The chain is Flagellar transcriptional regulator FlhC from Cupriavidus pinatubonensis (strain JMP 134 / LMG 1197) (Cupriavidus necator (strain JMP 134)).